We begin with the raw amino-acid sequence, 907 residues long: Translation initiation factor IF-2 (907 aa).

The interval 1–305 (MSEGNDQDQG…SLASVRRQRE (305 aa)) is disordered. Positions 62–80 (SGSGSSGGGRAGGRGGSGG) are enriched in gly residues. Basic and acidic residues-rich tracts occupy residues 93–114 (RVLEEQRAEAVRREQERREQEK) and 122–158 (EEARRRDEEARRAAEDEVREKEEAAARAREEEAERRA). The segment covering 211 to 230 (PARPVTPSRPATPAATPQAP) has biased composition (low complexity). 2 stretches are compositionally biased toward basic and acidic residues: residues 240 to 249 (RVGEAEDDRR) and 271 to 280 (KGGDSRRSGR). Residues 406 to 576 (PRPPVVTVMG…LLQAEMLDLR (171 aa)) enclose the tr-type G domain. Positions 415–422 (GHVDHGKT) are G1. 415-422 (GHVDHGKT) contributes to the GTP binding site. Residues 440 to 444 (GITQH) form a G2 region. The G3 stretch occupies residues 462-465 (DTPG). Residues 462–466 (DTPGH) and 516–519 (NKCD) each bind GTP. The tract at residues 516-519 (NKCD) is G4. Residues 552 to 554 (SAL) form a G5 region.

The protein belongs to the TRAFAC class translation factor GTPase superfamily. Classic translation factor GTPase family. IF-2 subfamily.

It is found in the cytoplasm. Functionally, one of the essential components for the initiation of protein synthesis. Protects formylmethionyl-tRNA from spontaneous hydrolysis and promotes its binding to the 30S ribosomal subunits. Also involved in the hydrolysis of GTP during the formation of the 70S ribosomal complex. This Gluconacetobacter diazotrophicus (strain ATCC 49037 / DSM 5601 / CCUG 37298 / CIP 103539 / LMG 7603 / PAl5) protein is Translation initiation factor IF-2.